We begin with the raw amino-acid sequence, 205 residues long: uncharacterized protein (205 aa).

5 consecutive transmembrane segments (helical) span residues 5 to 25 (VWLA…SGTV), 41 to 61 (GAII…GIGI), 68 to 88 (SALA…WLGI), 117 to 137 (LINL…PQFI), and 147 to 167 (FLVL…GYTA).

Belongs to the Rht family.

It is found in the cell inner membrane. Involved in positive regulation of motility and negative regulation of biofilm formation. This is an uncharacterized protein from Vibrio cholerae serotype O1 (strain ATCC 39315 / El Tor Inaba N16961).